Consider the following 163-residue polypeptide: Large ribosomal subunit protein uL10 (163 aa).

The protein belongs to the universal ribosomal protein uL10 family. Part of the ribosomal stalk of the 50S ribosomal subunit. The N-terminus interacts with L11 and the large rRNA to form the base of the stalk. The C-terminus forms an elongated spine to which L12 dimers bind in a sequential fashion forming a multimeric L10(L12)X complex.

Functionally, forms part of the ribosomal stalk, playing a central role in the interaction of the ribosome with GTP-bound translation factors. This is Large ribosomal subunit protein uL10 from Histophilus somni (strain 129Pt) (Haemophilus somnus).